The following is a 375-amino-acid chain: CCN family member 1 (375 aa).

A signal peptide spans 1–22; sequence MGSAGARPALAAALLCLARLAL. The IGFBP N-terminal domain occupies 23 to 94; it reads GSPCPAVCQC…AATNGICRAQ (72 aa). Disulfide bonds link cysteine 26–cysteine 50, cysteine 30–cysteine 52, cysteine 32–cysteine 53, cysteine 39–cysteine 56, cysteine 64–cysteine 78, and cysteine 70–cysteine 91. The VWFC domain maps to 98-164; the sequence is RPCEYNSKIY…GQCCEEWVCD (67 aa). The TSP type-1 domain occupies 223–268; it reads KCIVQTTSWSQCSKTCGTGISTRVTNDNPDCKLIKETRICEVRPCG. Residues 274–310 are heparin-binding; it reads SLKKGKKCTKTKKSPSPVRFTYAGCSSVKKYRPKYCG. Disulfide bonds link cysteine 281–cysteine 318, cysteine 298–cysteine 332, cysteine 309–cysteine 348, cysteine 312–cysteine 350, and cysteine 317–cysteine 354. The CTCK domain maps to 281-355; that stretch reads CTKTKKSPSP…QSCRCNYNCP (75 aa).

The protein belongs to the CCN family.

It is found in the secreted. Functionally, probable secreted regulatory protein. The polypeptide is CCN family member 1 (CCN1) (Gallus gallus (Chicken)).